The sequence spans 315 residues: uncharacterized protein (315 aa).

The span at 296 to 308 (RSKLRKGTHKRTP) shows a compositional bias: basic residues. The segment at 296 to 315 (RSKLRKGTHKRTPGRAGDAD) is disordered.

The protein belongs to the metallo-dependent hydrolases superfamily. Peptidase M19 family.

This is an uncharacterized protein from Acinetobacter calcoaceticus.